Consider the following 313-residue polypeptide: MDVGIKGFGAYAPEKVVENTYFESFLETSDEWISQMTGIKERRWAGEDEETSDMAYQASLKAIEDAGIEASEIDMIIVATSTGDFPFPTVANILQERLGIGKVASMDQLAACSGFMYSMINAKQFVQSGDYKNILVVGVDKLSKITDFTDRSTAILFGDGAGAVVIGEVSEGRGILSYELGSDGSGAKHLYLNPENGKIFMNGREVFKFAVRIMGEASNNAVAKANLTADDVDMFVPHQANIRIMESARERLGIPKEKMSVSVDRFGNTSAASIPLSIGQELENGRIKDDDVLVLVGFGGGLTWGAVTLRWGK.

Active-site residues include cysteine 112 and histidine 238. The tract at residues 239–243 is ACP-binding; sequence QANIR. Residue asparagine 268 is part of the active site.

This sequence belongs to the thiolase-like superfamily. FabH family. As to quaternary structure, homodimer.

It is found in the cytoplasm. It catalyses the reaction malonyl-[ACP] + acetyl-CoA + H(+) = 3-oxobutanoyl-[ACP] + CO2 + CoA. Its pathway is lipid metabolism; fatty acid biosynthesis. Functionally, catalyzes the condensation reaction of fatty acid synthesis by the addition to an acyl acceptor of two carbons from malonyl-ACP. Catalyzes the first condensation reaction which initiates fatty acid synthesis and may therefore play a role in governing the total rate of fatty acid production. Possesses both acetoacetyl-ACP synthase and acetyl transacylase activities. Its substrate specificity determines the biosynthesis of branched-chain and/or straight-chain of fatty acids. The sequence is that of Beta-ketoacyl-[acyl-carrier-protein] synthase III from Staphylococcus saprophyticus subsp. saprophyticus (strain ATCC 15305 / DSM 20229 / NCIMB 8711 / NCTC 7292 / S-41).